Reading from the N-terminus, the 253-residue chain is MVSSFTSAPRSGFYYFAQGWKLVSQPGIRRFVILPLLVNILLMGGAFWWLFTQLDVWIPTLMSYVPDWLQWLSYLLWPLAVISVLLVFGYFFSTIANWIAAPFNGLLAEQLEARLTGATPPDTGIFGIMKDVPRIMKREWQKFAWYLPRAIVLLILYFIPGIGQTVAPVLWFLFSAWMLAIQYCDYPFDNHKVPFKEMRTALRTRKITNMQFGALTSLFTMIPLLNLFIMPVAVCGATAMWVDCYRDKHAMWR.

The next 4 membrane-spanning stretches (helical) occupy residues 31–51 (FVILPLLVNILLMGGAFWWLF), 75–95 (LLWPLAVISVLLVFGYFFSTI), 151–171 (IVLLILYFIPGIGQTVAPVLW), and 222–242 (IPLLNLFIMPVAVCGATAMWV).

This sequence belongs to the CysZ family.

Its subcellular location is the cell inner membrane. High affinity, high specificity proton-dependent sulfate transporter, which mediates sulfate uptake. Provides the sulfur source for the cysteine synthesis pathway. This is Sulfate transporter CysZ from Escherichia coli O127:H6 (strain E2348/69 / EPEC).